A 249-amino-acid polypeptide reads, in one-letter code: Segregation and condensation protein A (249 aa).

This sequence belongs to the ScpA family. In terms of assembly, component of a cohesin-like complex composed of ScpA, ScpB and the Smc homodimer, in which ScpA and ScpB bind to the head domain of Smc. The presence of the three proteins is required for the association of the complex with DNA.

The protein resides in the cytoplasm. Its function is as follows. Participates in chromosomal partition during cell division. May act via the formation of a condensin-like complex containing Smc and ScpB that pull DNA away from mid-cell into both cell halves. This chain is Segregation and condensation protein A, found in Listeria monocytogenes serotype 4a (strain HCC23).